Reading from the N-terminus, the 595-residue chain is Outer dynein arm-docking complex subunit 3 (595 aa).

The tract at residues 1-69 is disordered; it reads MTSPLCRAAS…RGAGKPSVHS (69 aa). 2 coiled-coil regions span residues 94–327 and 385–473; these read WNIK…REHL and FAQL…ASKL.

In terms of assembly, component of the outer dynein arm-docking complex along with ODAD1, ODAD2, ODAD4 and CLXN. Interacts with ODAD1. Interacts with PIERCE1 and PIERCE2; the interactions link the outer dynein arms docking complex (ODA-DC) to the internal microtubule inner proteins (MIP) in cilium axoneme.

The protein localises to the cytoplasm. Its subcellular location is the cytoskeleton. The protein resides in the cilium basal body. It localises to the microtubule organizing center. It is found in the centrosome. The protein localises to the centriole. Its subcellular location is the cilium axoneme. In terms of biological role, component of the outer dynein arm-docking complex (ODA-DC) that mediates outer dynein arms (ODA) binding onto the doublet microtubule. Involved in mediating assembly of both ODAs and their axonemal docking complex onto ciliary microtubules. This is Outer dynein arm-docking complex subunit 3 from Homo sapiens (Human).